Consider the following 89-residue polypeptide: Large ribosomal subunit protein bL31B (89 aa).

Belongs to the bacterial ribosomal protein bL31 family. Type B subfamily. As to quaternary structure, part of the 50S ribosomal subunit.

The polypeptide is Large ribosomal subunit protein bL31B (Corynebacterium urealyticum (strain ATCC 43042 / DSM 7109)).